A 172-amino-acid polypeptide reads, in one-letter code: DNA-directed RNA polymerase II subunit RPB7 (172 aa).

It belongs to the eukaryotic RPB7/RPC8 RNA polymerase subunit family. In terms of assembly, component of the RNA polymerase II (Pol II) core complex consisting of 12 subunits: a ten-subunit catalytic core composed of POLR2A/RPB1, POLR2B/RPB2, POLR2C/RPB3, POLR2I/RPB9, POLR2J/RPB11, POLR2E/RPABC1, POLR2F/RPABC2, POLR2H/RPABC3, POLR2K/RPABC4 and POLR2L/RPABC5 and a mobile stalk composed of two subunits POLR2D/RPB4 and POLR2G/RPB7, protruding from the core and functioning primarily in transcription initiation. Part of Pol II(G) complex, in which Pol II core associates with an additional subunit POLR2M; unlike conventional Pol II, Pol II(G) functions as a transcriptional repressor. Part of TBP-based Pol II pre-initiation complex (PIC), in which Pol II core assembles with general transcription factors and other specific initiation factors including GTF2E1, GTF2E2, GTF2F1, GTF2F2, TCEA1, ERCC2, ERCC3, GTF2H2, GTF2H3, GTF2H4, GTF2H5, GTF2A1, GTF2A2, GTF2B and TBP; this large multi-subunit PIC complex mediates DNA unwinding and targets Pol II core to the transcription start site where the first phosphodiester bond forms.

It is found in the nucleus. Core component of RNA polymerase II (Pol II), a DNA-dependent RNA polymerase which synthesizes mRNA precursors and many functional non-coding RNAs using the four ribonucleoside triphosphates as substrates. Pol II is the central component of the basal RNA polymerase II transcription machinery. It is composed of mobile elements that move relative to each other. POLR2G/RPB7 is part of a subcomplex with POLR2D/RPB4 that binds to a pocket formed by POLR2A/RPB1, POLR2B/RPB2 and POLR2F/RPABC2 at the base of the clamp element. The POLR2D/RPB4-POLR2G/RPB7 subcomplex seems to lock the clamp via POLR2G/RPB7 in the closed conformation thus preventing double-stranded DNA to enter the active site cleft. The POLR2D/RPB4-POLR2G/RPB7 subcomplex binds single-stranded DNA and RNA. The sequence is that of DNA-directed RNA polymerase II subunit RPB7 (POLR2G) from Bos taurus (Bovine).